The primary structure comprises 427 residues: Adenylosuccinate synthetase (427 aa).

GTP contacts are provided by residues 12–18 and 40–42; these read GDEGKGK and GHT. The active-site Proton acceptor is aspartate 13. Residues aspartate 13 and glycine 40 each coordinate Mg(2+). Residues 13–16, 38–41, threonine 128, arginine 142, glutamine 223, threonine 238, and arginine 302 contribute to the IMP site; these read DEGK and NAGH. Catalysis depends on histidine 41, which acts as the Proton donor. Residue 298–304 coordinates substrate; the sequence is TTTGRPR. GTP contacts are provided by residues arginine 304, 330–332, and 412–414; these read KLD and AVG.

The protein belongs to the adenylosuccinate synthetase family. As to quaternary structure, homodimer. Requires Mg(2+) as cofactor.

Its subcellular location is the cytoplasm. It catalyses the reaction IMP + L-aspartate + GTP = N(6)-(1,2-dicarboxyethyl)-AMP + GDP + phosphate + 2 H(+). It functions in the pathway purine metabolism; AMP biosynthesis via de novo pathway; AMP from IMP: step 1/2. In terms of biological role, plays an important role in the de novo pathway of purine nucleotide biosynthesis. Catalyzes the first committed step in the biosynthesis of AMP from IMP. This chain is Adenylosuccinate synthetase, found in Heliobacterium modesticaldum (strain ATCC 51547 / Ice1).